The following is a 430-amino-acid chain: Adenylosuccinate synthetase (430 aa).

Residues 11 to 17 and 39 to 41 contribute to the GTP site; these read GDEGKGK and GHS. D12 acts as the Proton acceptor in catalysis. Mg(2+) is bound by residues D12 and G39. IMP-binding positions include 12 to 15, 37 to 40, T129, R143, N221, T236, and R300; these read DEGK and NAGH. H40 functions as the Proton donor in the catalytic mechanism. Residue 296-302 participates in substrate binding; the sequence is VSTGRKR. GTP is bound by residues R302, 328–330, and 412–414; these read KLD and GTG.

The protein belongs to the adenylosuccinate synthetase family. Homodimer. Requires Mg(2+) as cofactor.

Its subcellular location is the cytoplasm. The catalysed reaction is IMP + L-aspartate + GTP = N(6)-(1,2-dicarboxyethyl)-AMP + GDP + phosphate + 2 H(+). It functions in the pathway purine metabolism; AMP biosynthesis via de novo pathway; AMP from IMP: step 1/2. Plays an important role in the de novo pathway and in the salvage pathway of purine nucleotide biosynthesis. Catalyzes the first committed step in the biosynthesis of AMP from IMP. This Sordaria macrospora (strain ATCC MYA-333 / DSM 997 / K(L3346) / K-hell) protein is Adenylosuccinate synthetase.